The sequence spans 382 residues: Flap endonuclease 1-A (382 aa).

The interval 1 to 104 is N-domain; it reads MGIHGLAKLI…GELAKRSERR (104 aa). A Mg(2+)-binding site is contributed by Asp34. Positions 47 and 70 each coordinate DNA. Mg(2+) is bound by residues Asp86, Glu158, Glu160, Asp179, and Asp181. An I-domain region spans residues 122 to 253; sequence NIEKFTKRLV…KRAIDLIRQH (132 aa). Glu158 is a DNA binding site. 2 residues coordinate DNA: Gly231 and Asp233. Asp233 provides a ligand contact to Mg(2+). The interval 336 to 344 is interaction with PCNA; that stretch reads TQGRLDDFF. The segment at 350–382 is disordered; that stretch reads VSSTKRKEAESKGSAKKKAKTGGTPAGKFKRGK.

Belongs to the XPG/RAD2 endonuclease family. FEN1 subfamily. Interacts with PCNA. Three molecules of fen1 bind to one PCNA trimer with each molecule binding to one PCNA monomer. PCNA stimulates the nuclease activity without altering cleavage specificity. Mg(2+) is required as a cofactor. In terms of processing, phosphorylated. Phosphorylation upon DNA damage induces relocalization to the nuclear plasma.

Its subcellular location is the nucleus. The protein localises to the nucleolus. The protein resides in the nucleoplasm. It localises to the mitochondrion. Its function is as follows. Structure-specific nuclease with 5'-flap endonuclease and 5'-3' exonuclease activities involved in DNA replication and repair. During DNA replication, cleaves the 5'-overhanging flap structure that is generated by displacement synthesis when DNA polymerase encounters the 5'-end of a downstream Okazaki fragment. It enters the flap from the 5'-end and then tracks to cleave the flap base, leaving a nick for ligation. Also involved in the long patch base excision repair (LP-BER) pathway, by cleaving within the apurinic/apyrimidinic (AP) site-terminated flap. Acts as a genome stabilization factor that prevents flaps from equilibrating into structures that lead to duplications and deletions. Also possesses 5'-3' exonuclease activity on nicked or gapped double-stranded DNA, and exhibits RNase H activity. Also involved in replication and repair of rDNA and in repairing mitochondrial DNA. This Xenopus laevis (African clawed frog) protein is Flap endonuclease 1-A (fen1-a).